The chain runs to 364 residues: Metalloendoproteinase 1-MMP (364 aa).

Residues 1–28 (MSRNLIYRRNRALCFVLILFCFPYRFGA) form the signal peptide. Residues 29-149 (RNTPEAEQST…NNDFLHTTAH (121 aa)) constitute a propeptide, activation peptide. Residue asparagine 49 is glycosylated (N-linked (GlcNAc...) asparagine). The Cysteine switch motif lies at 128-135 (PRCGVSDT). Cysteine 130 contributes to the Zn(2+) binding site. Aspartate 211 is a Ca(2+) binding site. Positions 221 and 223 each coordinate Zn(2+). Aspartate 228 and glycine 229 together coordinate Ca(2+). Histidine 236 contributes to the Zn(2+) binding site. Residue glycine 243 participates in Ca(2+) binding. Histidine 246 serves as a coordination point for Zn(2+). Positions 248 and 251 each coordinate Ca(2+). Histidine 275 lines the Zn(2+) pocket. Residue glutamate 276 is part of the active site. Histidine 279 and histidine 285 together coordinate Zn(2+). Residue asparagine 338 is glycosylated (N-linked (GlcNAc...) asparagine). The GPI-anchor amidated glycine moiety is linked to residue glycine 339. A propeptide spans 340–364 (TVSHRFLSGNFIGYVLLVVGLILFL) (removed in mature form).

It belongs to the peptidase M10A family. Matrix metalloproteinases (MMPs) subfamily. Ca(2+) is required as a cofactor. Requires Zn(2+) as cofactor. In terms of tissue distribution, mostly expressed in flowers, roots and stems, and, to a lower extent, in leaves.

The protein resides in the cell membrane. Inhibited by human TIMP-1 and TIMP-2 and by the peptide hydroxamate inhibitor (BB-94). Repressed by acetohydroxamic acid (AHA). Functionally, matrix metalloproteinases (MMPs) or matrixins may play a role in the degradation and remodeling of the extracellular matrix (ECM) during development or in response to stresses. Can cleave myelin basic protein as well as fluorigenic peptide substrates, McaPLANvaDpaAR-NH(2) and McaPChaGNvaHADpa-NH(2) 4-fold more efficiently than McaPLGLDpaAR-NH(2) (QF24). Active on myelin basic protein (MBP) and, to some extent, on McaPLGLDpaAR-NH(2) (QF24) and beta-casein. This chain is Metalloendoproteinase 1-MMP, found in Arabidopsis thaliana (Mouse-ear cress).